Consider the following 235-residue polypeptide: Large ribosomal subunit protein uL4 (235 aa).

The segment at 45–75 is disordered; it reads RAGTASTKTRGEVSGGGRKPWPQKHTGRARH. The segment covering 65–75 has biased composition (basic residues); sequence WPQKHTGRARH.

This sequence belongs to the universal ribosomal protein uL4 family. As to quaternary structure, part of the 50S ribosomal subunit.

One of the primary rRNA binding proteins, this protein initially binds near the 5'-end of the 23S rRNA. It is important during the early stages of 50S assembly. It makes multiple contacts with different domains of the 23S rRNA in the assembled 50S subunit and ribosome. Its function is as follows. This protein only weakly controls expression of the E.coli S10 operon. It is incorporated into E.coli ribosomes, however it is not as firmly associated as the endogenous protein. Functionally, forms part of the polypeptide exit tunnel. This is Large ribosomal subunit protein uL4 (rplD) from Thermotoga maritima (strain ATCC 43589 / DSM 3109 / JCM 10099 / NBRC 100826 / MSB8).